The sequence spans 153 residues: Cofilin (153 aa).

Residues 15–147 (GVAVNDSALQ…AYESVLERVS (133 aa)) form the ADF-H domain.

The protein belongs to the actin-binding proteins ADF family.

It localises to the cytoplasm. The protein localises to the cytoskeleton. Its subcellular location is the nucleus matrix. Functionally, controls reversibly actin polymerization and depolymerization in a pH-sensitive manner. It has the ability to bind G- and F-actin in a 1:1 ratio of cofilin to actin. Binding to F-actin is regulated by tropomyosin. It is the major component of intranuclear and cytoplasmic actin rods. Required for accumulation of actin at the cell division site via depolymerizing actin at the cell ends. In association with myosin II has a role in the assembly of the contractile ring via severing actin filaments. Involved in the maintenance of the contractile ring once formed. In association with profilin and capping protein, has a role in the mitotic reorganization of the actin cytoskeleton. The protein is Cofilin (COF1) of Yarrowia lipolytica (strain CLIB 122 / E 150) (Yeast).